The chain runs to 678 residues: ATP-dependent RNA helicase DHX58 (678 aa).

In terms of domain architecture, Helicase ATP-binding spans I11–L188. Position 24–31 (L24–T31) interacts with ATP. The DECH box motif lies at D131–H134. A Helicase C-terminal domain is found at M353–D514. The stretch at E489–Q546 forms a coiled coil. Residues I542 to T669 form the RLR CTR domain. Zn(2+) is bound by residues C556, C559, C612, and C615. The RNA-binding stretch occupies residues V572–V655.

This sequence belongs to the helicase family. RLR subfamily. As to quaternary structure, monomer in the absence of dsRNA. Homodimer in the presence of dsRNA. Interacts with RIGI (via CARD domain), MAVS/IPS1 and DDX60. Found in a complex with RIGI and IFIH1/MDA5. Interacts with ANKRD17. Directly interacts with ATG5 and ATG12, either as ATG5 and ATG12 monomers or as ATG12-ATG5 conjugates. As to expression, highly expressed in mammary tissues. Expressed in liver and testis. Expressed at lower level in spleen, embryo, mammary gland and breast tumors.

The protein resides in the cytoplasm. It carries out the reaction ATP + H2O = ADP + phosphate + H(+). Functionally, acts as a regulator of RIGI and IFIH1/MDA5 mediated antiviral signaling. Cannot initiate antiviral signaling as it lacks the CARD domain required for activating MAVS/IPS1-dependent signaling events. Can have both negative and positive regulatory functions related to RIGI and IFIH1/MDA5 signaling and this role in regulating signaling may be complex and could probably depend on characteristics of the infecting virus or target cells, or both. Its inhibitory action on RIG-I signaling may involve the following mechanisms: competition with RIGI for binding to the viral RNA, binding to RIGI and inhibiting its dimerization and interaction with MAVS/IPS1, competing with IKBKE in its binding to MAVS/IPS1 thereby inhibiting activation of interferon regulatory factor 3 (IRF3). Its positive regulatory role may involve unwinding or stripping nucleoproteins of viral RNA thereby facilitating their recognition by RIGI and IFIH1/MDA5. Involved in the innate immune response to various RNA viruses and some DNA viruses such as poxviruses, and also to the bacterial pathogen Listeria monocytogenes. Can bind both ssRNA and dsRNA, with a higher affinity for dsRNA. Shows a preference to 5'-triphosphorylated RNA, although it can recognize RNA lacking a 5'-triphosphate. This chain is ATP-dependent RNA helicase DHX58, found in Mus musculus (Mouse).